Reading from the N-terminus, the 82-residue chain is Delta-ctenitoxin-Pn1a (82 aa).

The first 16 residues, 1-16 (MKVAIVFLSLLVLAFA), serve as a signal peptide directing secretion. The propeptide occupies 17 to 34 (SESIEENREEFPVEESAR). Disulfide bonds link Cys-35–Cys-49, Cys-42–Cys-55, Cys-46–Cys-82, Cys-48–Cys-65, and Cys-57–Cys-63.

It belongs to the neurotoxin 03 (Tx2) family. 05 subfamily. Expressed by the venom gland.

It localises to the secreted. Its function is as follows. This neurotoxin binds at site 3 of insect voltage-activated sodium channels (Nav) and prolongs evoked axonal action potentials by a slowing down of sodium current inactivation. The toxin also inhibits glutamate uptake from rat brain synaptosomes. It reversibly inhibits the N-methyl-D-aspartate (NMDA)-subtype of ionotropic glutamate receptor (GRIN). In addition, the toxin shows antinociceptive effect in all rat pain models tested (inflammatory, neuropathic and nociceptive). The antinociceptive effect is partially blocked when selective antagonists of both mu- and delta-opioid receptors are administered, revealing that the antinociceptive effect of the toxin involves both opioid and cannabinoid endogenous systems. In vivo, it is highly toxic to house fly (Musca domestica), toxic to cockroach, but has no effect when intracerebroventricularly injected into mice. The polypeptide is Delta-ctenitoxin-Pn1a (Phoneutria nigriventer (Brazilian armed spider)).